The sequence spans 610 residues: UvrABC system protein C (610 aa).

The 79-residue stretch at 16-94 (SQPGVYRMYD…IKLYQPRYNV (79 aa)) folds into the GIY-YIG domain. In terms of domain architecture, UVR spans 204–239 (QQVLTQLISRMEEASRLLHFEDAARIRDQIQAVRRV).

The protein belongs to the UvrC family. In terms of assembly, interacts with UvrB in an incision complex.

It localises to the cytoplasm. The UvrABC repair system catalyzes the recognition and processing of DNA lesions. UvrC both incises the 5' and 3' sides of the lesion. The N-terminal half is responsible for the 3' incision and the C-terminal half is responsible for the 5' incision. The sequence is that of UvrABC system protein C from Yersinia enterocolitica serotype O:8 / biotype 1B (strain NCTC 13174 / 8081).